We begin with the raw amino-acid sequence, 492 residues long: MTTTETSLSADTKNGIDFKIADLSLADFGRKELRIAEHEMPGLMSLRREYAEVQPLKGARISGSLHMTVQTAVLIETLTALGAEVRWASCNIFSTQDHAAAAVVVGPHGTPEEPKGVPVFAWKGESLEEYWWCAEQMLTWPDSDKPANMILDDGGDATMLVLRGMQYEKAGVVPPAEEDDSAEWKVFLGLLRSRFETDKGKWTKIAESVKGVTEETTTGVLRLYQFAEAGDLAFPAINVNDSVTKSKFDNKYGTRHSLIDGINRGTDALIGGKKVLICGYGDVGKGCAEAMKGQGARVSVTEIDPINALQAMMEGFDVVTVEDAIGDADIVVTSTGNKDIIMLEHIKAMKDHSILGNIGHFDNEIDMAGLERSGATRTNIKPQVDLWTFGDTGRSIIVLSEGRLLNLGNATGHPSFVMSNSFANQTIAQIELWTKNDEYDNEVYRLPKHLDEKVARIHVEALGGRLTKLTKDQAEYLGVDVEGPYKPDHYRY.

Positions 68, 153, and 215 each coordinate substrate. Position 216 to 218 (216 to 218 (TTT)) interacts with NAD(+). Lys-245 and Asp-249 together coordinate substrate. Residues Asn-250, 279–284 (GYGDVG), Glu-302, Asn-337, 358–360 (IGH), and Asn-406 each bind NAD(+).

It belongs to the adenosylhomocysteinase family. Requires NAD(+) as cofactor.

It localises to the cytoplasm. It catalyses the reaction S-adenosyl-L-homocysteine + H2O = L-homocysteine + adenosine. The protein operates within amino-acid biosynthesis; L-homocysteine biosynthesis; L-homocysteine from S-adenosyl-L-homocysteine: step 1/1. Functionally, may play a key role in the regulation of the intracellular concentration of adenosylhomocysteine. This Mycobacterium ulcerans (strain Agy99) protein is Adenosylhomocysteinase.